The sequence spans 574 residues: Potassium-transporting ATPase potassium-binding subunit (574 aa).

10 helical membrane-spanning segments follow: residues 7–27 (IELGLFIALLAVLNIPLGTHL), 65–85 (IEYAVGLLCFNFVGILVSYLI), 136–156 (FGLAVPNFTSAATGIAAAAAL), 175–195 (LIRIHYYLLLPLSLFIAIILL), 264–284 (FVEMLSIFLIPSALTYYFGLS), 292–312 (WSIWLTMTFCFLILTLSCFIF), 390–410 (GLYGILLFVILSVFLFGLMIG), 427–447 (MAVLALMIQYVLILGLSALAL), 494–514 (LLLGVAMFLGRYFVLIPILAI), and 534–554 (GWLFIFVLGATIFLLAALNFF).

Belongs to the KdpA family. In terms of assembly, the system is composed of three essential subunits: KdpA, KdpB and KdpC.

The protein localises to the cell inner membrane. In terms of biological role, part of the high-affinity ATP-driven potassium transport (or Kdp) system, which catalyzes the hydrolysis of ATP coupled with the electrogenic transport of potassium into the cytoplasm. This subunit binds the periplasmic potassium ions and delivers the ions to the membrane domain of KdpB through an intramembrane tunnel. The chain is Potassium-transporting ATPase potassium-binding subunit from Methylacidiphilum infernorum (isolate V4) (Methylokorus infernorum (strain V4)).